The following is a 162-amino-acid chain: NADH-quinone oxidoreductase subunit I (162 aa).

4Fe-4S ferredoxin-type domains are found at residues 53–83 (LRRYPNGEERCIACKLCEAVCPALAITIESE) and 93–122 (TRYDIDLIKCIFCGFCEEACPVDAIVETRV). Residues cysteine 63, cysteine 66, cysteine 69, cysteine 73, cysteine 102, cysteine 105, cysteine 108, and cysteine 112 each contribute to the [4Fe-4S] cluster site.

Belongs to the complex I 23 kDa subunit family. In terms of assembly, NDH-1 is composed of 14 different subunits. Subunits NuoA, H, J, K, L, M, N constitute the membrane sector of the complex. [4Fe-4S] cluster is required as a cofactor.

It is found in the cell inner membrane. It catalyses the reaction a quinone + NADH + 5 H(+)(in) = a quinol + NAD(+) + 4 H(+)(out). Functionally, NDH-1 shuttles electrons from NADH, via FMN and iron-sulfur (Fe-S) centers, to quinones in the respiratory chain. The immediate electron acceptor for the enzyme in this species is believed to be ubiquinone. Couples the redox reaction to proton translocation (for every two electrons transferred, four hydrogen ions are translocated across the cytoplasmic membrane), and thus conserves the redox energy in a proton gradient. The protein is NADH-quinone oxidoreductase subunit I of Nitrosomonas eutropha (strain DSM 101675 / C91 / Nm57).